The following is a 192-amino-acid chain: NF-kappa-B inhibitor-interacting Ras-like protein 1 (192 aa).

11 to 18 (GLLSVGKT) serves as a coordination point for GTP. The Effector region signature appears at 35-43 (DCETMEDVY). The interval 58–93 (HLYDTRGLQEGVELPKHYFSFADGFVLVYSVNNLES) is interactions with NFKBIA and NFKBIB. GTP is bound by residues 61 to 65 (DTRGL) and 120 to 123 (NKID). The tract at residues 168-192 (LSQPQSKSSFPLPGRKNKGNSNSEN) is disordered.

Belongs to the small GTPase superfamily. Ras family. KappaB-Ras subfamily. In terms of assembly, interacts with both NF-kappa-B inhibitor alpha (NFKBIA) and beta (NFKBIB) in vitro. However, it probably only interacts with NFKBIB in vivo. Forms a complex with NFKBIB and NF-kappa-B heterodimer (p50/NFKB1 and p65/RELA). Also interacts with c-Rel (REL). In terms of tissue distribution, widely expressed.

It is found in the cytoplasm. In terms of biological role, atypical Ras-like protein that acts as a potent regulator of NF-kappa-B activity by preventing the degradation of NF-kappa-B inhibitor beta (NFKBIB) by most signals, explaining why NFKBIB is more resistant to degradation. May act by blocking phosphorylation of NFKBIB and mediating cytoplasmic retention of p65/RELA NF-kappa-B subunit. It is unclear whether it acts as a GTPase. Both GTP- and GDP-bound forms block phosphorylation of NFKBIB. The chain is NF-kappa-B inhibitor-interacting Ras-like protein 1 (NKIRAS1) from Homo sapiens (Human).